A 100-amino-acid polypeptide reads, in one-letter code: Urease subunit gamma (100 aa).

It belongs to the urease gamma subunit family. As to quaternary structure, heterotrimer of UreA (gamma), UreB (beta) and UreC (alpha) subunits. Three heterotrimers associate to form the active enzyme.

The protein resides in the cytoplasm. It carries out the reaction urea + 2 H2O + H(+) = hydrogencarbonate + 2 NH4(+). It participates in nitrogen metabolism; urea degradation; CO(2) and NH(3) from urea (urease route): step 1/1. This is Urease subunit gamma from Hahella chejuensis (strain KCTC 2396).